The sequence spans 465 residues: Serine/threonine-protein kinase 38 (465 aa).

The residue at position 2 (A2) is an N-acetylalanine. An interaction with S100B region spans residues 62-87; that stretch reads KRLRRSAHARKETEFLRLKRTRLGLE. Phosphothreonine is present on T74. Residues 89–382 form the Protein kinase domain; that stretch reads FESLKVIGRG…VEEIKNNLFF (294 aa). ATP-binding positions include 95-103 and K118; that span reads IGRGAFGEV. The active-site Proton acceptor is the D212. S264 is modified (phosphoserine). S281 is subject to Phosphoserine; by autocatalysis. The UFM1-interacting motif (UFIM) motif lies at 306–311; the sequence is WSLGVI. The region spanning 383 to 455 is the AGC-kinase C-terminal domain; the sequence is EGVDWEHIRE…KRFEGLTARG (73 aa). Residue T444 is modified to Phosphothreonine; by STK24/MST3.

Belongs to the protein kinase superfamily. AGC Ser/Thr protein kinase family. In terms of assembly, homodimeric S100B binds two molecules of STK38. Interacts with MOB1 and MOB2. Interacts with MAP3K1 and MAP3K2 (via the kinase catalytic domain). Forms a tripartite complex with MOBKL1B and STK3/MST2. Interacts with MICAL1; leading to inhibit the protein kinase activity by antagonizing activation by MST1/STK4. Mg(2+) serves as cofactor. In terms of processing, ISGylated. Phosphorylated by STK3/MST2 and this is enhanced by MOBKL1B. In terms of tissue distribution, expressed at high levels in spleen, lung, thymus, brain and fat tissue.

Its subcellular location is the nucleus. It localises to the cytoplasm. The protein localises to the chromosome. It catalyses the reaction L-seryl-[protein] + ATP = O-phospho-L-seryl-[protein] + ADP + H(+). It carries out the reaction L-threonyl-[protein] + ATP = O-phospho-L-threonyl-[protein] + ADP + H(+). With respect to regulation, activated by binding of S100B which releases autoinhibitory N-lobe interactions, enabling ATP to bind and the autophosphorylation of Ser-281. Thr-444 then undergoes calcium-dependent phosphorylation by STK24/MST3. Interactions between phosphorylated Thr-444 and the N-lobe promote additional structural changes that complete the activation of the kinase. Autoinhibition is also released by the binding of MOB1/MOBKL1A and MOB2/HCCA2 to the N-terminal of STK38. In terms of biological role, serine/threonine-protein kinase that acts as a negative regulator of MAP3K1/2 signaling. Converts MAP3K2 from its phosphorylated form to its non-phosphorylated form and inhibits autophosphorylation of MAP3K2. Acts as an ufmylation 'reader' in a kinase-independent manner: specifically recognizes and binds mono-ufmylated histone H4 in response to DNA damage, promoting the recruitment of SUV39H1 to the double-strand breaks, resulting in ATM activation. The chain is Serine/threonine-protein kinase 38 from Mus musculus (Mouse).